Here is a 437-residue protein sequence, read N- to C-terminus: Elongation factor 1-gamma (437 aa).

At Ala-2 the chain carries N-acetylalanine. Positions 2-87 (AAGTLYTYPE…YVSNEELRGS (86 aa)) constitute a GST N-terminal domain. The GST C-terminal domain occupies 88–216 (TPEAAAQVVQ…VKLCEKMAQF (129 aa)). Lys-147 and Lys-212 each carry N6-acetyllysine. The span at 221 to 254 (FAETQPKKDTPRKEKGSREEKQKPQAERKEEKKA) shows a compositional bias: basic and acidic residues. Residues 221–268 (FAETQPKKDTPRKEKGSREEKQKPQAERKEEKKAAAPAPEEEMDECEQ) are disordered. A Glycyl lysine isopeptide (Lys-Gly) (interchain with G-Cter in SUMO1) cross-link involves residue Lys-253. The 162-residue stretch at 276–437 (AKDPFAHLPK…KAFNQGKIFK (162 aa)) folds into the EF-1-gamma C-terminal domain. Residue Lys-285 forms a Glycyl lysine isopeptide (Lys-Gly) (interchain with G-Cter in SUMO2) linkage. Position 401 is an N6-acetyllysine (Lys-401). Lys-434 bears the N6-acetyllysine; alternate mark. Lys-434 carries the N6-malonyllysine; alternate modification.

EF-1 is composed of four subunits: alpha, beta, delta, and gamma. In terms of tissue distribution, highly expressed in pancreatic tumor tissue and to a lesser extent in normal kidney, intestine, pancreas, stomach, lung, brain, spleen and liver.

Functionally, probably plays a role in anchoring the complex to other cellular components. This is Elongation factor 1-gamma (EEF1G) from Homo sapiens (Human).